Reading from the N-terminus, the 230-residue chain is Enolase-phosphatase E1 (230 aa).

This sequence belongs to the HAD-like hydrolase superfamily. MasA/MtnC family. As to quaternary structure, monomer. Mg(2+) serves as cofactor.

The enzyme catalyses 5-methylsulfanyl-2,3-dioxopentyl phosphate + H2O = 1,2-dihydroxy-5-(methylsulfanyl)pent-1-en-3-one + phosphate. It functions in the pathway amino-acid biosynthesis; L-methionine biosynthesis via salvage pathway; L-methionine from S-methyl-5-thio-alpha-D-ribose 1-phosphate: step 3/6. Its pathway is amino-acid biosynthesis; L-methionine biosynthesis via salvage pathway; L-methionine from S-methyl-5-thio-alpha-D-ribose 1-phosphate: step 4/6. Its function is as follows. Bifunctional enzyme that catalyzes the enolization of 2,3-diketo-5-methylthiopentyl-1-phosphate (DK-MTP-1-P) into the intermediate 2-hydroxy-3-keto-5-methylthiopentenyl-1-phosphate (HK-MTPenyl-1-P), which is then dephosphorylated to form the acireductone 1,2-dihydroxy-3-keto-5-methylthiopentene (DHK-MTPene). This Bradyrhizobium sp. (strain BTAi1 / ATCC BAA-1182) protein is Enolase-phosphatase E1.